We begin with the raw amino-acid sequence, 79 residues long: U-actitoxin-Bgr3d (79 aa).

The signal sequence occupies residues 1–21 (MSYERLLCLVLVASFIAASVA). The propeptide occupies 22-38 (QHPGDAPRMEDDSSAIQ). 3 disulfides stabilise this stretch: Cys44–Cys76, Cys46–Cys69, and Cys59–Cys77.

The protein belongs to the sea anemone type 3 (BDS) potassium channel toxin family.

It is found in the secreted. The protein resides in the nematocyst. Functionally, potently and selectively inhibits voltage-gated potassium channels Kv11/KCNH/ERG. Acts as a gating-modifier toxin that shifts the voltage-dependence of ERG activation in the positive direction and suppresses its current amplitudes elicited by strong depolarizing pulses that maximally activate the channels. The protein is U-actitoxin-Bgr3d of Bunodosoma granuliferum (Red warty sea anemone).